Here is a 252-residue protein sequence, read N- to C-terminus: Glucosamine-6-phosphate deaminase (252 aa).

Asp67 functions as the Proton acceptor; for enolization step in the catalytic mechanism. The active-site For ring-opening step is Asn137. Catalysis depends on His139, which acts as the Proton acceptor; for ring-opening step. Residue Glu144 is the For ring-opening step of the active site.

Belongs to the glucosamine/galactosamine-6-phosphate isomerase family. NagB subfamily.

It catalyses the reaction alpha-D-glucosamine 6-phosphate + H2O = beta-D-fructose 6-phosphate + NH4(+). The protein operates within amino-sugar metabolism; N-acetylneuraminate degradation; D-fructose 6-phosphate from N-acetylneuraminate: step 5/5. Its function is as follows. Catalyzes the reversible isomerization-deamination of glucosamine 6-phosphate (GlcN6P) to form fructose 6-phosphate (Fru6P) and ammonium ion. The chain is Glucosamine-6-phosphate deaminase from Staphylococcus aureus (strain MRSA252).